The primary structure comprises 387 residues: Succinate--CoA ligase [ADP-forming] subunit beta (387 aa).

The 237-residue stretch at 9–245 (KDLLESYGLK…KSQENAKELK (237 aa)) folds into the ATP-grasp domain. ATP contacts are provided by residues lysine 46, 53-55 (GRG), glutamate 100, tyrosine 103, and glutamate 108. The Mg(2+) site is built by asparagine 200 and aspartate 214. Substrate contacts are provided by residues asparagine 265 and 322–324 (GIV).

Belongs to the succinate/malate CoA ligase beta subunit family. In terms of assembly, heterotetramer of two alpha and two beta subunits. Requires Mg(2+) as cofactor.

It carries out the reaction succinate + ATP + CoA = succinyl-CoA + ADP + phosphate. It catalyses the reaction GTP + succinate + CoA = succinyl-CoA + GDP + phosphate. It participates in carbohydrate metabolism; tricarboxylic acid cycle; succinate from succinyl-CoA (ligase route): step 1/1. In terms of biological role, succinyl-CoA synthetase functions in the citric acid cycle (TCA), coupling the hydrolysis of succinyl-CoA to the synthesis of either ATP or GTP and thus represents the only step of substrate-level phosphorylation in the TCA. The beta subunit provides nucleotide specificity of the enzyme and binds the substrate succinate, while the binding sites for coenzyme A and phosphate are found in the alpha subunit. The chain is Succinate--CoA ligase [ADP-forming] subunit beta from Francisella tularensis subsp. tularensis (strain WY96-3418).